We begin with the raw amino-acid sequence, 1368 residues long: DNA-directed RNA polymerase subunit beta (1368 aa).

Belongs to the RNA polymerase beta chain family. In terms of assembly, the RNAP catalytic core consists of 2 alpha, 1 beta, 1 beta' and 1 omega subunit. When a sigma factor is associated with the core the holoenzyme is formed, which can initiate transcription.

The catalysed reaction is RNA(n) + a ribonucleoside 5'-triphosphate = RNA(n+1) + diphosphate. In terms of biological role, DNA-dependent RNA polymerase catalyzes the transcription of DNA into RNA using the four ribonucleoside triphosphates as substrates. The chain is DNA-directed RNA polymerase subunit beta from Herminiimonas arsenicoxydans.